An 85-amino-acid chain; its full sequence is Large ribosomal subunit protein bL27 (85 aa).

Residues 1–22 form a disordered region; it reads MAHKKGASSTRNGRDSNAQRLG. A compositionally biased stretch (polar residues) spans 7-19; sequence ASSTRNGRDSNAQ.

This sequence belongs to the bacterial ribosomal protein bL27 family.

This Streptomyces griseus protein is Large ribosomal subunit protein bL27 (rpmA).